Consider the following 225-residue polypeptide: Urease accessory protein UreF (225 aa).

Belongs to the UreF family. UreD, UreF and UreG form a complex that acts as a GTP-hydrolysis-dependent molecular chaperone, activating the urease apoprotein by helping to assemble the nickel containing metallocenter of UreC. The UreE protein probably delivers the nickel.

It is found in the cytoplasm. Functionally, required for maturation of urease via the functional incorporation of the urease nickel metallocenter. This Thermosynechococcus vestitus (strain NIES-2133 / IAM M-273 / BP-1) protein is Urease accessory protein UreF.